A 378-amino-acid polypeptide reads, in one-letter code: Alginate lyase (378 aa).

A signal peptide spans 1–28 (MQTPKLIRPTLLSMAILSSMAWATGASA). Substrate contacts are provided by residues 67-68 (SK), 140-141 (HT), and Tyr-258. Residues 359–378 (LTKVYDPSHEKGDKGDNDGS) form a disordered region. The segment covering 364 to 378 (DPSHEKGDKGDNDGS) has biased composition (basic and acidic residues).

It belongs to the polysaccharide lyase 5 family.

The protein resides in the periplasm. It catalyses the reaction Eliminative cleavage of alginate to give oligosaccharides with 4-deoxy-alpha-L-erythro-hex-4-enuronosyl groups at their non-reducing ends and beta-D-mannuronate at their reducing end.. Functionally, catalyzes the depolymerization of alginate by cleaving the beta-1,4 glycosidic bond between two adjacent sugar residues via a beta-elimination mechanism. May serve to degrade mislocalized alginate that is trapped in the periplasmic space. The protein is Alginate lyase of Pseudomonas syringae pv. syringae (strain B728a).